A 562-amino-acid chain; its full sequence is Potassium-transporting ATPase potassium-binding subunit (562 aa).

Transmembrane regions (helical) follow at residues F6–F26, Y62–M82, G132–I152, V170–V190, F253–V273, L283–L303, F327–V347, A356–V376, G379–G399, M416–I436, L483–I503, and L526–A546.

Belongs to the KdpA family. As to quaternary structure, the system is composed of three essential subunits: KdpA, KdpB and KdpC.

It localises to the cell inner membrane. Part of the high-affinity ATP-driven potassium transport (or Kdp) system, which catalyzes the hydrolysis of ATP coupled with the electrogenic transport of potassium into the cytoplasm. This subunit binds the periplasmic potassium ions and delivers the ions to the membrane domain of KdpB through an intramembrane tunnel. This Serratia proteamaculans (strain 568) protein is Potassium-transporting ATPase potassium-binding subunit.